The following is a 799-amino-acid chain: Conserved oligomeric Golgi complex subunit 6 (799 aa).

It belongs to the COG6 family.

Its subcellular location is the golgi apparatus membrane. Functionally, acts as a component of the peripheral membrane COG complex that is involved in intra-Golgi protein trafficking. COG is located at the cis-Golgi, and regulates tethering of retrograde intra-Golgi vesicles and possibly a number of other membrane trafficking events. The sequence is that of Conserved oligomeric Golgi complex subunit 6 (COG6) from Scheffersomyces stipitis (strain ATCC 58785 / CBS 6054 / NBRC 10063 / NRRL Y-11545) (Yeast).